Here is a 205-residue protein sequence, read N- to C-terminus: Deoxyuridine 5'-triphosphate nucleotidohydrolase (205 aa).

Ser54 is modified (phosphoserine). Substrate-binding positions include 126-128 (RSG), 140-143 (GVID), Gly151, and 199-200 (FG).

This sequence belongs to the dUTPase family. In terms of assembly, homotrimer. Requires Mg(2+) as cofactor. In terms of tissue distribution, expressed in all tissues examined. Higher levels in heart and kidney.

The protein localises to the cytoplasm. It is found in the nucleus. It catalyses the reaction dUTP + H2O = dUMP + diphosphate + H(+). It participates in pyrimidine metabolism; dUMP biosynthesis; dUMP from dCTP (dUTP route): step 2/2. Its function is as follows. Catalyzes the cleavage of 2'-deoxyuridine 5'-triphosphate (dUTP) into 2'-deoxyuridine 5'-monophosphate (dUMP) and inorganic pyrophosphate and through its action efficiently prevents uracil misincorporation into DNA and at the same time provides dUMP, the substrate for de novo thymidylate biosynthesis. Inhibits peroxisome proliferator-activated receptor (PPAR) activity by binding of its N-terminal to PPAR, preventing the latter's dimerization with retinoid X receptor. Essential for embryonic development. This is Deoxyuridine 5'-triphosphate nucleotidohydrolase (Dut) from Rattus norvegicus (Rat).